Here is a 388-residue protein sequence, read N- to C-terminus: S-adenosylmethionine synthase (388 aa).

Position 16 (histidine 16) interacts with ATP. Aspartate 18 is a binding site for Mg(2+). Glutamate 44 contributes to the K(+) binding site. Residues glutamate 57 and glutamine 100 each contribute to the L-methionine site. The flexible loop stretch occupies residues glutamine 100–arginine 110. ATP contacts are provided by residues aspartate 165–lysine 167, aspartate 240, arginine 246–lysine 247, alanine 263, and lysine 267. An L-methionine-binding site is contributed by aspartate 240. An L-methionine-binding site is contributed by lysine 271.

The protein belongs to the AdoMet synthase family. Homotetramer; dimer of dimers. Mg(2+) is required as a cofactor. It depends on K(+) as a cofactor.

The protein resides in the cytoplasm. It catalyses the reaction L-methionine + ATP + H2O = S-adenosyl-L-methionine + phosphate + diphosphate. Its pathway is amino-acid biosynthesis; S-adenosyl-L-methionine biosynthesis; S-adenosyl-L-methionine from L-methionine: step 1/1. In terms of biological role, catalyzes the formation of S-adenosylmethionine (AdoMet) from methionine and ATP. The overall synthetic reaction is composed of two sequential steps, AdoMet formation and the subsequent tripolyphosphate hydrolysis which occurs prior to release of AdoMet from the enzyme. The polypeptide is S-adenosylmethionine synthase (Acinetobacter baumannii (strain ACICU)).